The primary structure comprises 317 residues: Putative S-adenosyl-L-methionine-dependent methyltransferase MSMEG_0093 (317 aa).

S-adenosyl-L-methionine is bound by residues Asp-134 and 163–164; that span reads DL.

It belongs to the UPF0677 family.

Functionally, exhibits S-adenosyl-L-methionine-dependent methyltransferase activity. In Mycolicibacterium smegmatis (strain ATCC 700084 / mc(2)155) (Mycobacterium smegmatis), this protein is Putative S-adenosyl-L-methionine-dependent methyltransferase MSMEG_0093.